The following is a 164-amino-acid chain: Aspartic proteinase nepenthesin-1 (164 aa).

A Peptidase A1 domain is found at 17–164; that stretch reads YLMXLSIGTP…VSFVSAQCGA (148 aa). The active site involves aspartate 35. Asparagine 93 carries an N-linked (GlcNAc...) asparagine glycan.

It belongs to the peptidase A1 family. Parenchymal cells surrounding the secretory glands.

The protein resides in the secreted. It catalyses the reaction Similar to pepsin, but also cleaves on either side of Asp and at Lys-|-Arg.. Inhibited by pepstatin and by diazoacetyl-D,L-norleucine methyl ester (DAN) in the presence of Cu(2+) ions. Functionally, extracellular proteinase found in the pitcher fluid of carnivorous plants. Digest prey for nitrogen uptake. This is Aspartic proteinase nepenthesin-1 from Nepenthes distillatoria (Pitcher plant).